Here is a 322-residue protein sequence, read N- to C-terminus: Mitochondrial thiamine pyrophosphate carrier 1 (322 aa).

3 Solcar repeats span residues 12 to 111, 122 to 208, and 215 to 310; these read GSKT…VTLA, PAAA…LRVP, and PFGS…VLRL. Transmembrane regions (helical) follow at residues 18-38, 92-108, 128-148, 180-200, 221-241, and 285-302; these read MIAG…LDVV, LMYV…YRSV, FIAG…LDLL, FFQG…IFFA, ATAG…FDLI, and GLTV…VTMW.

This sequence belongs to the mitochondrial carrier (TC 2.A.29) family.

Its subcellular location is the mitochondrion inner membrane. Mitochondrial transporter that mediates uptake of thiamine pyrophosphate (ThPP) into mitochondria. The protein is Mitochondrial thiamine pyrophosphate carrier 1 (tpc1) of Sclerotinia sclerotiorum (strain ATCC 18683 / 1980 / Ss-1) (White mold).